Reading from the N-terminus, the 770-residue chain is Semaphorin-4F (770 aa).

The signal sequence occupies residues 1–34; sequence MPASAARPRPGPGQPTASPFPLLLLAVLSGPVSG. The Extracellular segment spans residues 35-659; sequence RVPRSVPRTS…RDAPSRAHTV (625 aa). The Sema domain maps to 42-510; that stretch reads RTSLPISEAD…SRTEVTQVNT (469 aa). An N-linked (GlcNAc...) asparagine glycan is attached at N64. A disulfide bridge connects residues C112 and C122. N133 carries N-linked (GlcNAc...) asparagine glycosylation. 3 disulfide bridges follow: C140/C149, C273/C384, and C297/C343. N509 carries an N-linked (GlcNAc...) asparagine glycan. The PSI domain occupies 512–563; the sequence is NCGRLQSCSECILAQDPVCAWSFRLDECVAHAGEHRGLVQDIESADVSSLCP. Intrachain disulfides connect C513-C530, C522-C539, and C587-C628. The Ig-like C2-type domain maps to 580–635; that stretch reads AAHVVLPCSPSSAWASCVWHQPSGVTALTPRRDGLEVVVTPGAMGAYACECQEGGA. The helical transmembrane segment at 660 to 680 threads the bilayer; it reads GAGLAGFFLGILAASLTLILI. At 681 to 770 the chain is on the cytoplasmic side; the sequence is GRRQQRRRQR…PLATCDETSI (90 aa). Residues 696 to 725 are disordered; that stretch reads DKVGLDLGAPPSGTTSYSQDPPSPSPEDER. S718 and S720 each carry phosphoserine. Positions 768–770 match the PDZ-binding motif; sequence TSI.

Belongs to the semaphorin family. Interacts (via PDZ-binding motif) with DLG4/SAP90 (via PDZ domain 2); this interaction may promote translocation of DLG4/SAP90 to the membrane.

It is found in the cell membrane. The protein resides in the postsynaptic density. It localises to the perikaryon. The protein localises to the cell projection. Its subcellular location is the dendrite. In terms of biological role, probable cell surface receptor that regulates oligodendroglial precursor cell migration. Might also regulate differentiation of oligodendroglial precursor cells. Has growth cone collapse activity against retinal ganglion-cell axons. The chain is Semaphorin-4F (SEMA4F) from Homo sapiens (Human).